Here is a 420-residue protein sequence, read N- to C-terminus: Probable serine hydroxymethyltransferase (420 aa).

Residues L121 and 125–127 each bind (6S)-5,6,7,8-tetrahydrofolate; that span reads GHL. K230 is modified (N6-(pyridoxal phosphate)lysine). Residues E246 and 354–356 each bind (6S)-5,6,7,8-tetrahydrofolate; that span reads SPF.

Belongs to the SHMT family. Homodimer. The cofactor is pyridoxal 5'-phosphate.

The protein localises to the cytoplasm. The catalysed reaction is (6R)-5,10-methylene-5,6,7,8-tetrahydrofolate + glycine + H2O = (6S)-5,6,7,8-tetrahydrofolate + L-serine. It participates in one-carbon metabolism; tetrahydrofolate interconversion. In terms of biological role, catalyzes the reversible interconversion of serine and glycine with tetrahydrofolate (THF) serving as the one-carbon carrier. This reaction serves as the major source of one-carbon groups required for the biosynthesis of purines, thymidylate, methionine, and other important biomolecules. The sequence is that of Probable serine hydroxymethyltransferase from Rickettsia bellii (strain RML369-C).